A 593-amino-acid chain; its full sequence is Proline dehydrogenase 1, mitochondrial (593 aa).

The disordered stretch occupies residues 24 to 44 (PAAREQPAAGPGAEPVCGPAE). Residues K368 and K479 each carry the N6-acetyllysine modification.

Belongs to the proline oxidase family. FAD serves as cofactor.

The protein localises to the mitochondrion matrix. The catalysed reaction is L-proline + a quinone = (S)-1-pyrroline-5-carboxylate + a quinol + H(+). Its pathway is amino-acid degradation; L-proline degradation into L-glutamate; L-glutamate from L-proline: step 1/2. Functionally, converts proline to delta-1-pyrroline-5-carboxylate. The protein is Proline dehydrogenase 1, mitochondrial of Bos taurus (Bovine).